An 841-amino-acid chain; its full sequence is Protein translocase subunit SecA (841 aa).

ATP contacts are provided by residues Gln85, 103–107, and Asp492; that span reads GEGKT. Positions 790 to 814 are disordered; sequence IQGQTTAHQPKEGDEEKQAKKKPVR. A compositionally biased stretch (basic and acidic residues) spans 798–807; sequence QPKEGDEEKQ. Zn(2+)-binding residues include Cys825, Cys827, Cys836, and Cys837.

The protein belongs to the SecA family. In terms of assembly, monomer and homodimer. Part of the essential Sec protein translocation apparatus which comprises SecA, SecYEG and auxiliary proteins SecDF. Other proteins may also be involved. Zn(2+) serves as cofactor.

Its subcellular location is the cell membrane. It is found in the cytoplasm. It carries out the reaction ATP + H2O + cellular proteinSide 1 = ADP + phosphate + cellular proteinSide 2.. Part of the Sec protein translocase complex. Interacts with the SecYEG preprotein conducting channel. Has a central role in coupling the hydrolysis of ATP to the transfer of proteins into and across the cell membrane, serving as an ATP-driven molecular motor driving the stepwise translocation of polypeptide chains across the membrane. The chain is Protein translocase subunit SecA from Bacillus licheniformis (strain ATCC 14580 / DSM 13 / JCM 2505 / CCUG 7422 / NBRC 12200 / NCIMB 9375 / NCTC 10341 / NRRL NRS-1264 / Gibson 46).